The sequence spans 2172 residues: Non-reducing polyketide synthase dpfgA (2172 aa).

The tract at residues 74–181 is N-terminal acylcarrier protein transacylase domain (SAT); that stretch reads EWIKCGNSSL…LALCVGALVD (108 aa). In terms of domain architecture, Ketosynthase family 3 (KS3) spans 389-783; that stretch reads DDSIAIIGVS…GTNAAMLVCQ (395 aa). Active-site for beta-ketoacyl synthase activity residues include Cys-529, His-665, and His-706. The segment at 895 to 1197 is malonyl-CoA:ACP transacylase (MAT) domain; it reads VFAGQTGRQA…SFHSILLQGQ (303 aa). Ser-981 functions as the For acyl/malonyl transferase activity in the catalytic mechanism. Residues 1270 to 1403 form an N-terminal hotdog fold region; the sequence is PELVSLAGPT…GTINWQGQGC (134 aa). The 312-residue stretch at 1270–1581 folds into the PKS/mFAS DH domain; the sequence is PELVSLAGPT…LKRIPIRSLQ (312 aa). The product template (PT) domain stretch occupies residues 1277 to 1575; it reads GPTDGETVEF…EIIGASLKRI (299 aa). The tract at residues 1428–1581 is C-terminal hotdog fold; the sequence is SASTVQGLFV…LKRIPIRSLQ (154 aa). 2 disordered regions span residues 1608–1631 and 1650–1672; these read DSDSDLPDSEANSPRVGSDLHADF and YPMDSSSFSSAQPPSSASSVLSD. Positions 1650–1668 are enriched in low complexity; that stretch reads YPMDSSSFSSAQPPSSASS. One can recognise a Carrier domain in the interval 1671 to 1747; that stretch reads SDHDQESTAL…DLYRMVLNHD (77 aa). Residue Ser-1707 is modified to O-(pantetheine 4'-phosphoryl)serine. Positions 1751–1773 are disordered; it reads DRGSTVLSDKAPKSKSDSSLHGQ. The interval 1975-2155 is methyltransferase (CMeT) domain; the sequence is EFLHRVLSRL…DAGFIHVDWT (181 aa).

It participates in secondary metabolite biosynthesis; terpenoid biosynthesis. Functionally, non-reducing polyketide synthase; part of the gene cluster that mediates the biosynthesis of diterpenoid pyrones. The first step of the pathway is the synthesis of the alpha-pyrone moiety by the polyketide synthase dpfgA via condensation of one acetyl-CoA starter unit with 3 malonyl-CoA units and 2 methylations. The alpha-pyrone is then combined with geranylgeranyl pyrophosphate (GGPP) formed by the GGPP synthase dpfgD through the action of the prenyltransferase dpfgC to yield a linear alpha-pyrone diterpenoid. Subsequent steps in the diterpenoid pyrone biosynthetic pathway involve the decalin core formation, which is initiated by the epoxidation of the C10-C11 olefin by the FAD-dependent oxidoreductase dpfgE, and is followed by a cyclization cascade catalyzed by the terpene cyclase dpfgB. The short chain dehydrogenase/reductase dpfgG then oxidizes the 8S hydroxy group to a ketone and the short chain dehydrogenase/reductase dpfgH reduces the ketone to the 8R hydroxy group to yield higginsianin B. Higginsianin B is further methylated by the methyltransferase dpfgI to produce the intermediate named FDDP B. The cytochrome P450 monooxygenase dfgpJ then catalyzes a three-step oxidation at C-27 to generate a carboxylic acid as well as C-26 hydroxylation. Finally, methyltransferase dpfgK methylates the carboxylic acid generated by dpfgJ, yielding the final diterpenoid pyrones from the pathway which were named FDDP D and FDDP E. This is Non-reducing polyketide synthase dpfgA from Gibberella zeae (strain ATCC MYA-4620 / CBS 123657 / FGSC 9075 / NRRL 31084 / PH-1) (Wheat head blight fungus).